Consider the following 145-residue polypeptide: uncharacterized protein (145 aa).

This sequence belongs to the methyltransferase superfamily.

Its function is as follows. Probable methyltransferase. This is an uncharacterized protein from Schizosaccharomyces pombe (strain 972 / ATCC 24843) (Fission yeast).